The sequence spans 813 residues: MSGSQNNDKRQFLLERLLDAVKQCQIRFGGRKEIASDSDSRVTCLCAQFEAVLQHGLKRSRGLALTAAAIKQAAGFASKTETEPVFWYYVKEVLNKHELQRFYSLRHIASDVGRGRAWLRCALNEHSLERYLHMLLADRCRLSTFYEDWSFVMDEERSSMLPTMAAGLNSILFAINIDNKDLNGQSKFAPTVSDLLKESTQNVTSLLKESTQGVSSLFREITASSAVSILIKPEQETDPLPVVSRNVSADAKCKKERKKKKKVTNIISFDDEEDEQNSGDVFKKTPGAGESSEDNSDRSSVNIMSAFESPFGPNSNGSQSSNSWKIDSLSLNGEFGYQKLDVKSIDDEDVDENEDDVYGNSSGRKHRGHSESPEKPLEGNTCLSQMHSWAPLKVLHNDSDILFPVSGVGSYSPADAPLGSLENGTGPEDHVLPDPGLRYSVEASSPGHGSPLSSLLPSASVPESMTISELRQATVAMMNRKDELEEENRSLRNLLDGEMEHSAALRQEVDTLKRKVAEQEERQGMKVQALARENEVLKVQLKKYVGAVQMLKREGQTAEVPNLWSVDGEVTVAEQKPGEIAEELASSYERKLIEVAEMHGELIEFNERLHRALVAKEALVSQMRQELIDLRGPVPGDLSQTSEDQSLSDFEISNRALINVWIPSVFLRGKAANAFHVYQVYIRIKDDEWNIYRRYTEFRSLHHKLQNKYPQVRAYNFPPKKAIGNKDAKFVEERRKQLQNYLRSVMNKVIQMVPEFAASPKKETLIQLMPFFVDITPPGEPVNSRPKAASRFPKLSRGQPRETRNVEPQSGDL.

The region spanning 36-180 is the RUN domain; it reads SDSDSRVTCL…ILFAINIDNK (145 aa). Phosphoserine occurs at positions 268, 291, 292, 330, and 344. Residues 269-299 form a disordered region; the sequence is FDDEEDEQNSGDVFKKTPGAGESSEDNSDRS. A compositionally biased stretch (acidic residues) spans 346-357; sequence DDEDVDENEDDV. Residues 346–378 form a disordered region; it reads DDEDVDENEDDVYGNSSGRKHRGHSESPEKPLE. Residues S445 and S450 each carry the phosphoserine modification. Residues 466–545 are a coiled coil; it reads TISELRQATV…VLKVQLKKYV (80 aa). S639 is modified (phosphoserine). T641 carries the phosphothreonine modification. Residues S642 and S646 each carry the phosphoserine modification. Residues 656 to 779 form the PX domain; it reads ALINVWIPSV…PFFVDITPPG (124 aa). A disordered region spans residues 778-813; it reads PGEPVNSRPKAASRFPKLSRGQPRETRNVEPQSGDL.

It belongs to the sorting nexin family.

In Homo sapiens (Human), this protein is Sorting nexin-29 (SNX29).